A 240-amino-acid polypeptide reads, in one-letter code: NAD(P)H-hydrate epimerase (240 aa).

A YjeF N-terminal domain is found at 15–224; it reads AQEIDAELMG…SYNLKLPCYP (210 aa). Residue 66–70 participates in (6S)-NADPHX binding; it reads NQGGD. K(+) is bound by residues Q67 and D129. (6S)-NADPHX-binding positions include 133–139 and D162; that span reads GFSFHSE. Position 165 (S165) interacts with K(+).

The protein belongs to the NnrE/AIBP family. It depends on K(+) as a cofactor.

The protein localises to the cytoplasm. Its subcellular location is the mitochondrion. It catalyses the reaction (6R)-NADHX = (6S)-NADHX. It carries out the reaction (6R)-NADPHX = (6S)-NADPHX. Catalyzes the epimerization of the S- and R-forms of NAD(P)HX, a damaged form of NAD(P)H that is a result of enzymatic or heat-dependent hydration. This is a prerequisite for the S-specific NAD(P)H-hydrate dehydratase to allow the repair of both epimers of NAD(P)HX. The polypeptide is NAD(P)H-hydrate epimerase (Puccinia graminis f. sp. tritici (strain CRL 75-36-700-3 / race SCCL) (Black stem rust fungus)).